A 422-amino-acid chain; its full sequence is 3-phosphoshikimate 1-carboxyvinyltransferase (422 aa).

3-phosphoshikimate is bound by residues Lys-20, Ser-21, and Arg-25. Phosphoenolpyruvate is bound at residue Lys-20. Residues Gly-92 and Arg-120 each contribute to the phosphoenolpyruvate site. 3-phosphoshikimate contacts are provided by Ser-163, Ser-164, Gln-165, Ser-191, Asp-304, and Lys-331. A phosphoenolpyruvate-binding site is contributed by Gln-165. The active-site Proton acceptor is the Asp-304. 2 residues coordinate phosphoenolpyruvate: Arg-335 and Arg-377.

It belongs to the EPSP synthase family. In terms of assembly, monomer.

The protein localises to the cytoplasm. It carries out the reaction 3-phosphoshikimate + phosphoenolpyruvate = 5-O-(1-carboxyvinyl)-3-phosphoshikimate + phosphate. It participates in metabolic intermediate biosynthesis; chorismate biosynthesis. Its function is as follows. Catalyzes the transfer of the enolpyruvyl moiety of phosphoenolpyruvate (PEP) to the 5-hydroxyl of shikimate-3-phosphate (S3P) to produce enolpyruvyl shikimate-3-phosphate and inorganic phosphate. The chain is 3-phosphoshikimate 1-carboxyvinyltransferase from Methanocorpusculum labreanum (strain ATCC 43576 / DSM 4855 / Z).